A 367-amino-acid chain; its full sequence is Glutamate 5-kinase (367 aa).

Lys10 contributes to the ATP binding site. Residues Ser50, Asp137, and Asn149 each coordinate substrate. ATP is bound by residues 169 to 170 (TD) and 211 to 217 (TGGMATK). Positions 275-353 (AGVIIVDNGA…QEISQILGYE (79 aa)) constitute a PUA domain.

This sequence belongs to the glutamate 5-kinase family.

The protein resides in the cytoplasm. The enzyme catalyses L-glutamate + ATP = L-glutamyl 5-phosphate + ADP. It participates in amino-acid biosynthesis; L-proline biosynthesis; L-glutamate 5-semialdehyde from L-glutamate: step 1/2. In terms of biological role, catalyzes the transfer of a phosphate group to glutamate to form L-glutamate 5-phosphate. The chain is Glutamate 5-kinase from Proteus mirabilis (strain HI4320).